A 132-amino-acid polypeptide reads, in one-letter code: Large ribosomal subunit protein uL22 (132 aa).

It belongs to the universal ribosomal protein uL22 family. In terms of assembly, part of the 50S ribosomal subunit.

This protein binds specifically to 23S rRNA; its binding is stimulated by other ribosomal proteins, e.g. L4, L17, and L20. It is important during the early stages of 50S assembly. It makes multiple contacts with different domains of the 23S rRNA in the assembled 50S subunit and ribosome. Its function is as follows. The globular domain of the protein is located near the polypeptide exit tunnel on the outside of the subunit, while an extended beta-hairpin is found that lines the wall of the exit tunnel in the center of the 70S ribosome. This is Large ribosomal subunit protein uL22 from Rhodospirillum centenum (strain ATCC 51521 / SW).